The sequence spans 379 residues: Queuine tRNA-ribosyltransferase (379 aa).

Catalysis depends on D94, which acts as the Proton acceptor. Substrate contacts are provided by residues 94–98 (DSGGF), D148, Q191, and G218. The tract at residues 249–255 (GVGSPDS) is RNA binding. Residue D268 is the Nucleophile of the active site. An RNA binding; important for wobble base 34 recognition region spans residues 273 to 277 (TRIAR). Zn(2+) contacts are provided by C306, C308, C311, and H337.

It belongs to the queuine tRNA-ribosyltransferase family. In terms of assembly, homodimer. Within each dimer, one monomer is responsible for RNA recognition and catalysis, while the other monomer binds to the replacement base PreQ1. It depends on Zn(2+) as a cofactor.

It carries out the reaction 7-aminomethyl-7-carbaguanine + guanosine(34) in tRNA = 7-aminomethyl-7-carbaguanosine(34) in tRNA + guanine. It functions in the pathway tRNA modification; tRNA-queuosine biosynthesis. Functionally, catalyzes the base-exchange of a guanine (G) residue with the queuine precursor 7-aminomethyl-7-deazaguanine (PreQ1) at position 34 (anticodon wobble position) in tRNAs with GU(N) anticodons (tRNA-Asp, -Asn, -His and -Tyr). Catalysis occurs through a double-displacement mechanism. The nucleophile active site attacks the C1' of nucleotide 34 to detach the guanine base from the RNA, forming a covalent enzyme-RNA intermediate. The proton acceptor active site deprotonates the incoming PreQ1, allowing a nucleophilic attack on the C1' of the ribose to form the product. After dissociation, two additional enzymatic reactions on the tRNA convert PreQ1 to queuine (Q), resulting in the hypermodified nucleoside queuosine (7-(((4,5-cis-dihydroxy-2-cyclopenten-1-yl)amino)methyl)-7-deazaguanosine). The sequence is that of Queuine tRNA-ribosyltransferase from Listeria welshimeri serovar 6b (strain ATCC 35897 / DSM 20650 / CCUG 15529 / CIP 8149 / NCTC 11857 / SLCC 5334 / V8).